We begin with the raw amino-acid sequence, 84 residues long: U4-theraphotoxin-Hhn1a (84 aa).

An N-terminal signal peptide occupies residues Met1–Ala22. The propeptide occupies Glu23–Arg47. Disulfide bonds link Cys51/Cys65, Cys55/Cys76, and Cys70/Cys81.

This sequence belongs to the neurotoxin 12 (Hwtx-2) family. 02 (Hwtx-2) subfamily. As to expression, expressed by the venom gland.

It is found in the secreted. Functionally, postsynaptic neurotoxin. The sequence is that of U4-theraphotoxin-Hhn1a from Cyriopagopus hainanus (Chinese bird spider).